We begin with the raw amino-acid sequence, 306 residues long: Beta-lactamase (306 aa).

The signal sequence occupies residues 1-34; that stretch reads MNVKRKATLKFGICIGLLCVSFTGFNSLFGSTHA. S89 acts as the Acyl-ester intermediate in catalysis. 251 to 253 lines the substrate pocket; sequence KSG.

Belongs to the class-A beta-lactamase family.

It catalyses the reaction a beta-lactam + H2O = a substituted beta-amino acid. Its function is as follows. This protein is a beta-lactamase with a substrate specificity for penicillins. This Bacillus amyloliquefaciens (Bacillus velezensis) protein is Beta-lactamase (penP).